A 383-amino-acid polypeptide reads, in one-letter code: PqqA peptide cyclase (383 aa).

The Radical SAM core domain occupies 11-226 (PGPPLWLLAE…TNQWREKLAA (216 aa)). [4Fe-4S] cluster-binding residues include C25, C29, and C32.

Belongs to the radical SAM superfamily. PqqE family. In terms of assembly, interacts with PqqD. The interaction is necessary for activity of PqqE. It depends on [4Fe-4S] cluster as a cofactor.

It carries out the reaction [PQQ precursor protein] + S-adenosyl-L-methionine = E-Y cross-linked-[PQQ precursor protein] + 5'-deoxyadenosine + L-methionine + H(+). The protein operates within cofactor biosynthesis; pyrroloquinoline quinone biosynthesis. Functionally, catalyzes the cross-linking of a glutamate residue and a tyrosine residue in the PqqA protein as part of the biosynthesis of pyrroloquinoline quinone (PQQ). This chain is PqqA peptide cyclase, found in Azotobacter vinelandii (strain DJ / ATCC BAA-1303).